The chain runs to 60 residues: Large ribosomal subunit protein bL32 (60 aa).

Residues 1–20 are compositionally biased toward basic residues; sequence MACPKKKTSKSKRSMRRAAW. The tract at residues 1–22 is disordered; it reads MACPKKKTSKSKRSMRRAAWKR.

The protein belongs to the bacterial ribosomal protein bL32 family.

This Thermosynechococcus vestitus (strain NIES-2133 / IAM M-273 / BP-1) protein is Large ribosomal subunit protein bL32.